The chain runs to 449 residues: UDP-N-acetylmuramoylalanine--D-glutamate ligase (449 aa).

118–124 (GTNGKTT) contributes to the ATP binding site.

Belongs to the MurCDEF family.

Its subcellular location is the cytoplasm. It carries out the reaction UDP-N-acetyl-alpha-D-muramoyl-L-alanine + D-glutamate + ATP = UDP-N-acetyl-alpha-D-muramoyl-L-alanyl-D-glutamate + ADP + phosphate + H(+). It functions in the pathway cell wall biogenesis; peptidoglycan biosynthesis. Functionally, cell wall formation. Catalyzes the addition of glutamate to the nucleotide precursor UDP-N-acetylmuramoyl-L-alanine (UMA). This chain is UDP-N-acetylmuramoylalanine--D-glutamate ligase, found in Staphylococcus aureus (strain MRSA252).